Consider the following 159-residue polypeptide: Phosphopantetheine adenylyltransferase (159 aa).

Residue threonine 10 participates in substrate binding. ATP-binding positions include 10-11 (TF) and histidine 18. The substrate site is built by lysine 42, methionine 74, and arginine 88. Residues 89-91 (GLR), glutamate 99, and 124-130 (WSFISSS) contribute to the ATP site.

The protein belongs to the bacterial CoaD family. As to quaternary structure, homohexamer. It depends on Mg(2+) as a cofactor.

It localises to the cytoplasm. It carries out the reaction (R)-4'-phosphopantetheine + ATP + H(+) = 3'-dephospho-CoA + diphosphate. It participates in cofactor biosynthesis; coenzyme A biosynthesis; CoA from (R)-pantothenate: step 4/5. In terms of biological role, reversibly transfers an adenylyl group from ATP to 4'-phosphopantetheine, yielding dephospho-CoA (dPCoA) and pyrophosphate. This is Phosphopantetheine adenylyltransferase from Salmonella agona (strain SL483).